The chain runs to 98 residues: C-C motif chemokine 19 (98 aa).

An N-terminal signal peptide occupies residues 1-21 (MALLLALSLLVLWTSPAPTLS). 2 cysteine pairs are disulfide-bonded: Cys29/Cys55 and Cys30/Cys71.

Belongs to the intercrine beta (chemokine CC) family. Interacts with TNFAIP6 (via Link domain). Expressed at high levels in the lymph nodes, thymus and appendix. Intermediate levels seen in colon and trachea, while low levels found in spleen, small intestine, lung, kidney and stomach.

The protein localises to the secreted. Functionally, may play a role not only in inflammatory and immunological responses but also in normal lymphocyte recirculation and homing. May play an important role in trafficking of T-cells in thymus, and T-cell and B-cell migration to secondary lymphoid organs. Binds to chemokine receptor CCR7. Recombinant CCL19 shows potent chemotactic activity for T-cells and B-cells but not for granulocytes and monocytes. Binds to atypical chemokine receptor ACKR4 and mediates the recruitment of beta-arrestin (ARRB1/2) to ACKR4. This is C-C motif chemokine 19 (CCL19) from Homo sapiens (Human).